The chain runs to 414 residues: Multifunctional CCA protein (414 aa).

G8 and R11 together coordinate ATP. Residues G8 and R11 each coordinate CTP. Positions 21 and 23 each coordinate Mg(2+). Residues R91, R137, and R140 each contribute to the ATP site. Positions 91, 137, and 140 each coordinate CTP. Residues 228–329 (TGIHTMMTVA…LKLFDAIDVW (102 aa)) enclose the HD domain.

The protein belongs to the tRNA nucleotidyltransferase/poly(A) polymerase family. Bacterial CCA-adding enzyme type 1 subfamily. Monomer. Can also form homodimers and oligomers. Mg(2+) is required as a cofactor. Ni(2+) serves as cofactor.

The catalysed reaction is a tRNA precursor + 2 CTP + ATP = a tRNA with a 3' CCA end + 3 diphosphate. The enzyme catalyses a tRNA with a 3' CCA end + 2 CTP + ATP = a tRNA with a 3' CCACCA end + 3 diphosphate. Catalyzes the addition and repair of the essential 3'-terminal CCA sequence in tRNAs without using a nucleic acid template. Adds these three nucleotides in the order of C, C, and A to the tRNA nucleotide-73, using CTP and ATP as substrates and producing inorganic pyrophosphate. tRNA 3'-terminal CCA addition is required both for tRNA processing and repair. Also involved in tRNA surveillance by mediating tandem CCA addition to generate a CCACCA at the 3' terminus of unstable tRNAs. While stable tRNAs receive only 3'-terminal CCA, unstable tRNAs are marked with CCACCA and rapidly degraded. This chain is Multifunctional CCA protein, found in Pectobacterium atrosepticum (strain SCRI 1043 / ATCC BAA-672) (Erwinia carotovora subsp. atroseptica).